Here is a 181-residue protein sequence, read N- to C-terminus: Large ribosomal subunit protein uL16 (181 aa).

It belongs to the universal ribosomal protein uL16 family. In terms of assembly, part of the 50S ribosomal subunit.

The protein is Large ribosomal subunit protein uL16 of Pyrococcus furiosus (strain ATCC 43587 / DSM 3638 / JCM 8422 / Vc1).